We begin with the raw amino-acid sequence, 641 residues long: MANRPTELAAFIRSSGEADGWIEESFKEPYVAFNPDVLMYNDTLFNELLLSAHALKINSIQDVQSDDTVEDAGDIGNEVIHSELVTFIETAADVYALDRQCLVCRVLDMYRRNFGLSALWMADYAFLCSKCLGSPPCATATFIAAFEFVYIMDKHFLSDHGCTLVRSFGKKLLTLEDIQRHFFLHGCFRTDGGVPGRRHDEVITSRSKQGRLVGRRGKFSTAGDAKVLYSNYSYLAQSATRALLMTLSDLGSAPLEVIEGRQKSISGDVRNELRDGIESRKRVAHVIHSVGPVHSCPTTLSVALAGWKDCAKNVECNFFQLESCTLRASSEDNDYEHEWELRASEEKLNVVENVQDMQQIDASQCEHHEHARNEDCTMGYGNLVLLLLAGTGSAPEAASELAFMAAKVRRETVDIFWKNHRREFANDVTAAYSACYGEDSEPDLELGPLMITQLKHAITKGGTSAECLLCNLLLIRTYWLAMRKFKRDIITYSANNIGLFHSIEPVLDAWRSQGHRTDLGDEGCFVTLMKSAGTEAIYKHLFCDPMCAARIAQTNPRSLFDHPDATNHDELALYKARLASQNHFEGRVCAGLWALAYTFKTYQVFPPRPTALSAFVKDAGALLQRHSISLISLEHTLGVYV.

Positions 101, 104, 181, 187, 467, 470, 540, and 547 each coordinate Zn(2+). Zinc finger regions lie at residues 101–187 (CLVC…LHGC) and 467–547 (CLLC…DPMC).

The protein belongs to the herpesviridae UL32 protein family.

The protein resides in the host cytoplasm. It is found in the host nucleus. Its function is as follows. Plays a role in efficient localization of neo-synthesized capsids to nuclear replication compartments, thereby controlling cleavage and packaging of virus genomic DNA. The chain is Packaging protein UL32 homolog (MDV046) from Gallus gallus (Chicken).